The following is a 104-amino-acid chain: Ribonuclease P protein component 4 (104 aa).

Zn(2+) contacts are provided by Cys63, Cys66, Cys89, and Cys92.

Belongs to the eukaryotic/archaeal RNase P protein component 4 family. As to quaternary structure, consists of a catalytic RNA component and at least 4-5 protein subunits. The cofactor is Zn(2+).

The protein localises to the cytoplasm. The catalysed reaction is Endonucleolytic cleavage of RNA, removing 5'-extranucleotides from tRNA precursor.. In terms of biological role, part of ribonuclease P, a protein complex that generates mature tRNA molecules by cleaving their 5'-ends. In Methanosphaera stadtmanae (strain ATCC 43021 / DSM 3091 / JCM 11832 / MCB-3), this protein is Ribonuclease P protein component 4.